The primary structure comprises 173 residues: Small ribosomal subunit protein uS13 (173 aa).

A compositionally biased stretch (basic residues) spans 130–143; it reads GVRHKRGQKVRGQR. The segment at 130–155 is disordered; that stretch reads GVRHKRGQKVRGQRTKSTGRTEGTIG.

The protein belongs to the universal ribosomal protein uS13 family. As to quaternary structure, part of the 30S ribosomal subunit. Forms a loose heterodimer with protein S19. Forms two bridges to the 50S subunit in the 70S ribosome.

Functionally, located at the top of the head of the 30S subunit, it contacts several helices of the 16S rRNA. In the 70S ribosome it contacts the 23S rRNA (bridge B1a) and protein L5 of the 50S subunit (bridge B1b), connecting the 2 subunits; these bridges are implicated in subunit movement. The protein is Small ribosomal subunit protein uS13 of Haloquadratum walsbyi (strain DSM 16790 / HBSQ001).